The following is a 208-amino-acid chain: MTPLALSMIIFAYLLGSISSAVLICRVLRLPDPRNVGSQNPGATNVLRIGGKKAAVAVLLCDMLKGTIPVWGGYFLNIEPFMLGLVAIAACLGHMYPIFFHFKGGKGVATALGAIAPIGLDLTAMVMATWLVVVVLFRYSSLAALVTVLLAPLYTWLIKPQYTLPVAMLCCLIVLRHHQNVKRLFAGTEPKVGEKNKKPSDDEESRVV.

Transmembrane regions (helical) follow at residues 4–24 (LALS…AVLI), 56–76 (VAVL…GYFL), 80–100 (PFML…PIFF), 117–137 (PIGL…VVLF), and 139–159 (YSSL…WLIK).

The protein belongs to the PlsY family. Probably interacts with PlsX.

It is found in the cell inner membrane. The enzyme catalyses an acyl phosphate + sn-glycerol 3-phosphate = a 1-acyl-sn-glycero-3-phosphate + phosphate. It functions in the pathway lipid metabolism; phospholipid metabolism. Catalyzes the transfer of an acyl group from acyl-phosphate (acyl-PO(4)) to glycerol-3-phosphate (G3P) to form lysophosphatidic acid (LPA). This enzyme utilizes acyl-phosphate as fatty acyl donor, but not acyl-CoA or acyl-ACP. This Vibrio cholerae serotype O1 (strain ATCC 39541 / Classical Ogawa 395 / O395) protein is Glycerol-3-phosphate acyltransferase.